The chain runs to 670 residues: CLK4-associating serine/arginine rich protein (670 aa).

Residue Ser-101 is modified to Phosphoserine. Disordered stretches follow at residues 171–232 and 258–670; these read TVAE…GMAD and EKAM…HYRH. Residues 182–214 are compositionally biased toward acidic residues; sequence PEEEESPAEEESNSDEDEVIPDIDVEVDVDELN. Positions 265–283 are enriched in basic residues; the sequence is RRSRRQRREFREKRLRGRK. Phosphoserine is present on residues Ser-285 and Ser-294. Residues 290 to 313 show a composition bias toward basic and acidic residues; sequence ARRDSPTYDPYKRSPSESSSESRS. Thr-327 carries the phosphothreonine modification. Residues Ser-331 and Ser-335 each carry the phosphoserine modification. Residues 340 to 355 show a composition bias toward low complexity; that stretch reads AAAAAAAAASGAATGK. Over residues 356 to 365 the composition is skewed to pro residues; the sequence is PPAPPQPGGP. Positions 378 to 400 are enriched in low complexity; sequence STSSSSSSASRTSSSRSRSSSSS. Composition is skewed to basic residues over residues 411–443 and 481–491; these read SGRH…RRHS and RGGRGPRHHSS. A compositionally biased stretch (low complexity) spans 492–529; sequence SRSSWSLSPSRSRSLTRSRSPSLSRSRSLSRSRSQSHS. Ser-543 is subject to Phosphoserine. Thr-569 carries the phosphothreonine modification. Residues 581–643 adopt a coiled-coil conformation; sequence ALNRQFKADK…ERQYSRQSRS (63 aa). Composition is skewed to basic and acidic residues over residues 586 to 613 and 621 to 637; these read FKAD…ELRA and KERE…ERQY. Residues 638–647 are compositionally biased toward low complexity; it reads SRQSRSPSPR. Over residues 655 to 670 the composition is skewed to basic residues; that stretch reads SRRRSRSRSRSPHYRH.

This sequence belongs to the splicing factor SR family. In terms of assembly, probably interacts with CLK4. Phosphorylated in vitro by CLK4.

The protein localises to the nucleus. Its function is as follows. Probably functions as an alternative splicing regulator. May regulate the mRNA splicing of genes such as CLK1. May act by regulating members of the CLK kinase family. This is CLK4-associating serine/arginine rich protein (CLASRP) from Bos taurus (Bovine).